We begin with the raw amino-acid sequence, 718 residues long: Probable trehalose-phosphatase (718 aa).

The tract at residues 449–470 (LSMDQTGHKKVDAKKKPGIRKK) is disordered. A compositionally biased stretch (basic residues) spans 459-470 (VDAKKKPGIRKK).

This sequence in the N-terminal section; belongs to the glycosyltransferase 20 family. It in the C-terminal section; belongs to the trehalose phosphatase family.

The enzyme catalyses alpha,alpha-trehalose 6-phosphate + H2O = alpha,alpha-trehalose + phosphate. The polypeptide is Probable trehalose-phosphatase (Encephalitozoon cuniculi (strain GB-M1) (Microsporidian parasite)).